Reading from the N-terminus, the 233-residue chain is 2-amino-5-formylamino-6-ribosylaminopyrimidin-4(3H)-one 5'-monophosphate deformylase (233 aa).

The Fe cation site is built by Glu33, His35, Asp44, and His114.

Belongs to the creatininase superfamily. FAPy deformylase family. In terms of assembly, homodimer. The cofactor is Fe(2+). Zn(2+) is required as a cofactor.

The enzyme catalyses 2-amino-5-formylamino-6-(5-phospho-D-ribosylamino)pyrimidin-4(3H)-one + H2O = 2,5-diamino-6-(1-D-ribosylamino)pyrimidin-4(3H)-one 5'-phosphate + formate + H(+). It functions in the pathway cofactor biosynthesis; coenzyme F420 biosynthesis. The protein operates within cofactor biosynthesis; riboflavin biosynthesis. Catalyzes the hydrolysis of the formamide of 2-amino-5-formylamino-6-ribosylamino-4(3H)-pyrimidinone 5'-monophosphate (FAPy) to form 2,5-diamino-6-ribosylamino-4(3H)-pyrimidinone 5'-phosphate (APy). This is 2-amino-5-formylamino-6-ribosylaminopyrimidin-4(3H)-one 5'-monophosphate deformylase from Methanosphaera stadtmanae (strain ATCC 43021 / DSM 3091 / JCM 11832 / MCB-3).